The following is a 164-amino-acid chain: ATP synthase subunit b (164 aa).

Residues 6 to 26 (GELVGNFILVTGSVIVLLLLI) form a helical membrane-spanning segment.

It belongs to the ATPase B chain family. In terms of assembly, F-type ATPases have 2 components, F(1) - the catalytic core - and F(0) - the membrane proton channel. F(1) has five subunits: alpha(3), beta(3), gamma(1), delta(1), epsilon(1). F(0) has three main subunits: a(1), b(2) and c(10-14). The alpha and beta chains form an alternating ring which encloses part of the gamma chain. F(1) is attached to F(0) by a central stalk formed by the gamma and epsilon chains, while a peripheral stalk is formed by the delta and b chains.

The protein localises to the cell membrane. Functionally, f(1)F(0) ATP synthase produces ATP from ADP in the presence of a proton or sodium gradient. F-type ATPases consist of two structural domains, F(1) containing the extramembraneous catalytic core and F(0) containing the membrane proton channel, linked together by a central stalk and a peripheral stalk. During catalysis, ATP synthesis in the catalytic domain of F(1) is coupled via a rotary mechanism of the central stalk subunits to proton translocation. Component of the F(0) channel, it forms part of the peripheral stalk, linking F(1) to F(0). The chain is ATP synthase subunit b from Streptococcus pyogenes serotype M1.